Consider the following 72-residue polypeptide: Mitotic-spindle organizing protein 1 (72 aa).

The protein belongs to the MOZART1 family. Part of the gamma-tubulin complex.

Its subcellular location is the cytoplasm. It localises to the cytoskeleton. The protein resides in the microtubule organizing center. It is found in the spindle pole body. In terms of biological role, required for gamma-tubulin complex recruitment to the microtubule organizing center (MTOC). This is Mitotic-spindle organizing protein 1 from Coccidioides immitis (strain RS) (Valley fever fungus).